Reading from the N-terminus, the 181-residue chain is Large ribosomal subunit protein uL5c (181 aa).

The protein belongs to the universal ribosomal protein uL5 family. As to quaternary structure, part of the 50S ribosomal subunit; contacts the 5S rRNA.

It is found in the plastid. The protein resides in the chloroplast. Functionally, binds 5S rRNA, forms part of the central protuberance of the 50S subunit. This is Large ribosomal subunit protein uL5c (rpl5) from Porphyra purpurea (Red seaweed).